The following is a 60-amino-acid chain: Small integral membrane protein 3 (60 aa).

A helical membrane pass occupies residues isoleucine 20 to cysteine 40.

Its subcellular location is the membrane. This is Small integral membrane protein 3 (SMIM3) from Homo sapiens (Human).